A 383-amino-acid chain; its full sequence is tRNA pseudouridine synthase B (383 aa).

Aspartate 53 functions as the Nucleophile in the catalytic mechanism.

It belongs to the pseudouridine synthase TruB family. Type 1 subfamily.

The catalysed reaction is uridine(55) in tRNA = pseudouridine(55) in tRNA. In terms of biological role, responsible for synthesis of pseudouridine from uracil-55 in the psi GC loop of transfer RNAs. The chain is tRNA pseudouridine synthase B from Tropheryma whipplei (strain TW08/27) (Whipple's bacillus).